The primary structure comprises 334 residues: Glycerol-3-phosphate dehydrogenase [NAD(P)+] (334 aa).

S14, Y15, H35, and K109 together coordinate NADPH. Sn-glycerol 3-phosphate-binding residues include K109, G138, and T140. Residue A142 coordinates NADPH. Sn-glycerol 3-phosphate is bound by residues K194, D247, S257, R258, and N259. K194 acts as the Proton acceptor in catalysis. R258 is a binding site for NADPH. V282 and E284 together coordinate NADPH.

Belongs to the NAD-dependent glycerol-3-phosphate dehydrogenase family.

Its subcellular location is the cytoplasm. The catalysed reaction is sn-glycerol 3-phosphate + NAD(+) = dihydroxyacetone phosphate + NADH + H(+). It catalyses the reaction sn-glycerol 3-phosphate + NADP(+) = dihydroxyacetone phosphate + NADPH + H(+). It participates in membrane lipid metabolism; glycerophospholipid metabolism. Its function is as follows. Catalyzes the reduction of the glycolytic intermediate dihydroxyacetone phosphate (DHAP) to sn-glycerol 3-phosphate (G3P), the key precursor for phospholipid synthesis. The chain is Glycerol-3-phosphate dehydrogenase [NAD(P)+] from Aeromonas salmonicida (strain A449).